The chain runs to 216 residues: Fibroblast growth factor 17 (216 aa).

The N-terminal stretch at 1–22 (MGAARLLPNLTLCLQLLILCCQ) is a signal peptide. Asn137 carries an N-linked (GlcNAc...) asparagine glycan. The segment at 195–216 (FEFVGSAPTRRTKRTRRPQSQT) is disordered. The segment covering 204–216 (RRTKRTRRPQSQT) has biased composition (basic residues).

It belongs to the heparin-binding growth factors family. As to quaternary structure, interacts with FGFR3 and FGFR4.

It is found in the secreted. Functionally, plays an important role in the regulation of embryonic development and as signaling molecule in the induction and patterning of the embryonic brain. Required for normal brain development. This is Fibroblast growth factor 17 (Fgf17) from Mus musculus (Mouse).